A 224-amino-acid polypeptide reads, in one-letter code: Large ribosomal subunit protein uL3 (224 aa).

N5-methylglutamine is present on Gln158.

It belongs to the universal ribosomal protein uL3 family. As to quaternary structure, part of the 50S ribosomal subunit. Forms a cluster with proteins L14 and L19. Methylated by PrmB.

Functionally, one of the primary rRNA binding proteins, it binds directly near the 3'-end of the 23S rRNA, where it nucleates assembly of the 50S subunit. This is Large ribosomal subunit protein uL3 from Paracidovorax citrulli (strain AAC00-1) (Acidovorax citrulli).